The primary structure comprises 310 residues: Porphobilinogen deaminase (310 aa).

Position 242 is an S-(dipyrrolylmethanemethyl)cysteine (Cys242).

This sequence belongs to the HMBS family. Monomer. Dipyrromethane serves as cofactor.

The catalysed reaction is 4 porphobilinogen + H2O = hydroxymethylbilane + 4 NH4(+). The protein operates within porphyrin-containing compound metabolism; protoporphyrin-IX biosynthesis; coproporphyrinogen-III from 5-aminolevulinate: step 2/4. In terms of biological role, tetrapolymerization of the monopyrrole PBG into the hydroxymethylbilane pre-uroporphyrinogen in several discrete steps. This is Porphobilinogen deaminase from Shewanella sp. (strain W3-18-1).